The chain runs to 261 residues: Large ribosomal subunit protein uL3 (261 aa).

Residues 138–148 (SVSHRSHGSTG) are compositionally biased toward low complexity. 2 disordered regions span residues 138–163 (SVSH…KKMA) and 214–261 (ADAP…GDQA). Position 151 is an N5-methylglutamine (Gln151). Residues 227–261 (APTPVEAAADEAAPAEEPAVTEAPAAEATEAGDQA) show a composition bias toward low complexity.

This sequence belongs to the universal ribosomal protein uL3 family. Part of the 50S ribosomal subunit. Forms a cluster with proteins L14 and L19. In terms of processing, methylated by PrmB.

One of the primary rRNA binding proteins, it binds directly near the 3'-end of the 23S rRNA, where it nucleates assembly of the 50S subunit. This is Large ribosomal subunit protein uL3 from Phenylobacterium zucineum (strain HLK1).